A 520-amino-acid chain; its full sequence is 3-phosphoshikimate 1-carboxyvinyltransferase, chloroplastic (520 aa).

The transit peptide at 1–76 (MAQVSRICNG…KVMSSVSTAE (76 aa)) directs the protein to the chloroplast. The segment at 20-39 (LSKSSQRKSPLSVSLKTQQH) is disordered. The 3-phosphoshikimate site is built by Lys-99, Ser-100, and Arg-104. Lys-99 provides a ligand contact to phosphoenolpyruvate. Residues Gly-177 and Arg-207 each contribute to the phosphoenolpyruvate site. Residues Ser-254, Ser-255, Gln-256, Ser-282, Asp-407, and Lys-434 each coordinate 3-phosphoshikimate. Gln-256 is a binding site for phosphoenolpyruvate. The active-site Proton acceptor is Asp-407. 3 residues coordinate phosphoenolpyruvate: Arg-438, Arg-480, and Lys-505.

It belongs to the EPSP synthase family.

It is found in the plastid. The protein localises to the chloroplast. It carries out the reaction 3-phosphoshikimate + phosphoenolpyruvate = 5-O-(1-carboxyvinyl)-3-phosphoshikimate + phosphate. The protein operates within metabolic intermediate biosynthesis; chorismate biosynthesis; chorismate from D-erythrose 4-phosphate and phosphoenolpyruvate: step 6/7. Its function is as follows. Catalyzes the transfer of the enolpyruvyl moiety of phosphoenolpyruvate (PEP) to the 5-hydroxyl of shikimate-3-phosphate (S3P) to produce enolpyruvyl shikimate-3-phosphate and inorganic phosphate. The chain is 3-phosphoshikimate 1-carboxyvinyltransferase, chloroplastic from Arabidopsis thaliana (Mouse-ear cress).